A 429-amino-acid polypeptide reads, in one-letter code: Arsenical pump membrane protein (429 aa).

10 helical membrane passes run 21–41 (GLGI…SGVV), 46–66 (IPVV…VIII), 98–118 (IVLL…ALIL), 121–141 (IVIA…AFVM), 178–198 (VMVP…HLFF), 228–248 (WIVL…GIPV), 249–269 (SAIA…GHAI), 274–294 (VLRG…LVVY), 316–336 (GLWA…SIMN), and 407–427 (IVMT…RLSF).

Its subcellular location is the cell inner membrane. Its function is as follows. Involved in arsenical resistance. Thought to form the channel of an arsenite pump. This Escherichia coli protein is Arsenical pump membrane protein (arsB).